The following is a 447-amino-acid chain: Asparagine--tRNA ligase (447 aa).

This sequence belongs to the class-II aminoacyl-tRNA synthetase family. Homodimer.

Its subcellular location is the cytoplasm. It carries out the reaction tRNA(Asn) + L-asparagine + ATP = L-asparaginyl-tRNA(Asn) + AMP + diphosphate + H(+). The chain is Asparagine--tRNA ligase from Herpetosiphon aurantiacus (strain ATCC 23779 / DSM 785 / 114-95).